The chain runs to 401 residues: Nodal homolog 3-A (401 aa).

An N-terminal signal peptide occupies residues 1–18 (MAFLNLFFCLVFISPLMA). A propeptide spanning residues 19-274 (MPPVLQGRKS…KVNGFRRLRR (256 aa)) is cleaved from the precursor. Asparagine 168, asparagine 337, asparagine 341, and asparagine 344 each carry an N-linked (GlcNAc...) asparagine glycan. 2 disulfide bridges follow: cysteine 299-cysteine 365 and cysteine 328-cysteine 396.

This sequence belongs to the TGF-beta family. As to quaternary structure, monomer. The propeptide region interacts with bmp4 in a non-covalent manner. As to expression, expressed in the epithelial layer of the Spemann organizer during gastrulation.

Its subcellular location is the secreted. Its function is as follows. Exhibits mesoderm-dorsalizing activity and neural-inducing activity, but lacks mesoderm-inducing activity. Regulates the expression of specific mesodermal and neural genes. Induces convergent extension movements at the embryonic midline by activating the fgf signaling pathway to induce t/bra expression in the organizer region. Acts with wnt11 to induce Spemann organizer cells and induce axis formation. The unprocessed protein antagonizes bmp-signaling. The protein is Nodal homolog 3-A (nodal3-a) of Xenopus laevis (African clawed frog).